The primary structure comprises 31 residues: Cytochrome b6-f complex subunit 6 (31 aa).

A helical membrane pass occupies residues 4–24 (ITSYFGFLLAALTITSVLFIG).

Belongs to the PetL family. As to quaternary structure, the 4 large subunits of the cytochrome b6-f complex are cytochrome b6, subunit IV (17 kDa polypeptide, PetD), cytochrome f and the Rieske protein, while the 4 small subunits are PetG, PetL, PetM and PetN. The complex functions as a dimer.

The protein resides in the plastid. It localises to the chloroplast thylakoid membrane. Its function is as follows. Component of the cytochrome b6-f complex, which mediates electron transfer between photosystem II (PSII) and photosystem I (PSI), cyclic electron flow around PSI, and state transitions. PetL is important for photoautotrophic growth as well as for electron transfer efficiency and stability of the cytochrome b6-f complex. The protein is Cytochrome b6-f complex subunit 6 of Lepidium virginicum (Virginia pepperweed).